We begin with the raw amino-acid sequence, 1522 residues long: Dicer-like protein 1 (1522 aa).

Acidic residues predominate over residues 1–12 (MTWAGDVEEQDD). The disordered stretch occupies residues 1–37 (MTWAGDVEEQDDYFSCSDVSTSGDRRKRAPQTVTQEE). Residues 76–258 (LFLRAKMQNT…EHVREAAREL (183 aa)) form the Helicase ATP-binding domain. 89-96 (LDTGTGKT) provides a ligand contact to ATP. A DEAH box motif is present at residues 202–205 (DEAH). The Helicase C-terminal domain maps to 408–576 (WLNLYYERTT…DVEQEKAELI (169 aa)). Residues 600–700 (SLSILSHFVA…LPTISKYLPA (101 aa)) form the Dicer dsRNA-binding fold domain. The PAZ domain maps to 859–980 (PFWKWSPQSR…ICPEPLHISN (122 aa)). RNase III domains lie at 995 to 1166 (IIHR…MQHH) and 1222 to 1373 (AHKI…VDSE). Residues glutamate 1262, aspartate 1359, and glutamate 1362 each contribute to the Mg(2+) site. Residues 1409–1478 (TRLSRLLSIN…SHAALEKLEG (70 aa)) form the DRBM domain. Cysteine 1421, histidine 1449, cysteine 1490, and cysteine 1492 together coordinate Zn(2+).

Belongs to the helicase family. Dicer subfamily. Mg(2+) serves as cofactor. The cofactor is Mn(2+).

Dicer-like endonuclease involved in cleaving double-stranded RNA in the RNA interference (RNAi) pathway. Produces 21 to 25 bp dsRNAs (siRNAs) which target the selective destruction of homologous RNAs leading to sequence-specific suppression of gene expression, called post-transcriptional gene silencing (PTGS). Part of a broad host defense response against viral infection and transposons. This Phaeosphaeria nodorum (strain SN15 / ATCC MYA-4574 / FGSC 10173) (Glume blotch fungus) protein is Dicer-like protein 1 (DCL1).